The primary structure comprises 428 residues: 2-isopropylmalate synthase 2 (428 aa).

The region spanning Pro-40–Tyr-302 is the Pyruvate carboxyltransferase domain. Mn(2+)-binding residues include Asp-49, His-241, His-243, and Asn-277.

This sequence belongs to the alpha-IPM synthase/homocitrate synthase family. LeuA type 1 subfamily. As to quaternary structure, homodimer. The cofactor is Mn(2+).

It is found in the cytoplasm. The enzyme catalyses 3-methyl-2-oxobutanoate + acetyl-CoA + H2O = (2S)-2-isopropylmalate + CoA + H(+). Its pathway is amino-acid biosynthesis; L-leucine biosynthesis; L-leucine from 3-methyl-2-oxobutanoate: step 1/4. Its function is as follows. Catalyzes the condensation of the acetyl group of acetyl-CoA with 3-methyl-2-oxobutanoate (2-ketoisovalerate) to form 3-carboxy-3-hydroxy-4-methylpentanoate (2-isopropylmalate). Has high alpha-isopropylmalate synthase activity and low citramalate synthase activity. This Leptospira interrogans serogroup Icterohaemorrhagiae serovar Lai (strain 56601) protein is 2-isopropylmalate synthase 2.